The sequence spans 315 residues: Porphobilinogen deaminase (315 aa).

Position 234 is an S-(dipyrrolylmethanemethyl)cysteine (Cys-234).

This sequence belongs to the HMBS family. In terms of assembly, monomer. The cofactor is dipyrromethane.

The catalysed reaction is 4 porphobilinogen + H2O = hydroxymethylbilane + 4 NH4(+). The protein operates within porphyrin-containing compound metabolism; protoporphyrin-IX biosynthesis; coproporphyrinogen-III from 5-aminolevulinate: step 2/4. In terms of biological role, tetrapolymerization of the monopyrrole PBG into the hydroxymethylbilane pre-uroporphyrinogen in several discrete steps. This is Porphobilinogen deaminase from Mycolicibacterium paratuberculosis (strain ATCC BAA-968 / K-10) (Mycobacterium paratuberculosis).